The following is a 430-amino-acid chain: Tol-Pal system protein TolB (430 aa).

The N-terminal stretch at 1–21 is a signal peptide; that stretch reads MKQALRVAFGFLMLWAAVLHA.

This sequence belongs to the TolB family. In terms of assembly, the Tol-Pal system is composed of five core proteins: the inner membrane proteins TolA, TolQ and TolR, the periplasmic protein TolB and the outer membrane protein Pal. They form a network linking the inner and outer membranes and the peptidoglycan layer.

It localises to the periplasm. In terms of biological role, part of the Tol-Pal system, which plays a role in outer membrane invagination during cell division and is important for maintaining outer membrane integrity. TolB occupies a key intermediary position in the Tol-Pal system because it communicates directly with both membrane-embedded components, Pal in the outer membrane and TolA in the inner membrane. This chain is Tol-Pal system protein TolB, found in Salmonella enteritidis PT4 (strain P125109).